An 84-amino-acid polypeptide reads, in one-letter code: MNAQFDDATKTLDTLGLRCPEPVMLVRKTIRNMAQGETLLVIADDPATVRDIPGFCRFMEHDLLQQETQATPYRYLIRKKEGQL.

The active-site Cysteine persulfide intermediate is C19.

The protein belongs to the sulfur carrier protein TusA family. Interacts with IscS.

The protein localises to the cytoplasm. Its pathway is tRNA modification. Sulfur carrier protein involved in sulfur trafficking in the cell. Part of a sulfur-relay system required for 2-thiolation during synthesis of 2-thiouridine of the modified wobble base 5-methylaminomethyl-2-thiouridine (mnm(5)s(2)U) in tRNA. Interacts with IscS and stimulates its cysteine desulfurase activity. Accepts an activated sulfur from IscS, which is then transferred to TusD, and thus determines the direction of sulfur flow from IscS to 2-thiouridine formation. Also appears to be involved in sulfur transfer for the biosynthesis of molybdopterin. The chain is Sulfur carrier protein TusA from Proteus mirabilis (strain HI4320).